The sequence spans 1470 residues: Membrane-associated guanylate kinase, WW and PDZ domain-containing protein 3 (1470 aa).

Residues C18–G108 form the PDZ 1 domain. Residues C18–G108 are interaction with ADRB1 and TGFA. The 175-residue stretch at R116–M290 folds into the Guanylate kinase-like domain. F123–H130 is an ATP binding site. The interval T184 to S266 is disordered. Pro residues predominate over residues P193–P204. Residue S236 is modified to Phosphoserine. The span at L238–K247 shows a compositional bias: acidic residues. WW domains lie at E296–L329 and G342–E375. Residues R413–R495 form the PDZ 2 domain. Residues R413 to R495 are interaction with PTEN. A disordered region spans residues L550–S575. Residues P559–S575 show a composition bias toward polar residues. The region spanning T581–R657 is the PDZ 3 domain. At S598 the chain carries Phosphoserine. Positions K665–S700 are disordered. Over residues T676–P686 the composition is skewed to polar residues. At S702 the chain carries Phosphoserine. A PDZ 4 domain is found at D729–R811. The tract at residues D729–R811 is interaction with ADGRB1. A disordered region spans residues K818–P847. The segment covering Q826–P847 has biased composition (polar residues). 2 positions are modified to phosphoserine: S833 and S916. Residues D852–E939 form the PDZ 5 domain. Residues D852–E939 are interaction with LPAR2 and GRIN2B. The tract at residues E939 to A976 is disordered. Over residues S946–A956 the composition is skewed to polar residues. The PDZ 6 domain maps to P1022–T1104. Disordered stretches follow at residues I1124–V1146 and D1167–L1470. A compositionally biased stretch (polar residues) spans T1175–N1191. Basic and acidic residues-rich tracts occupy residues S1193–L1209 and R1230–N1263. Residues S1285–G1304 are compositionally biased toward polar residues. S1321 carries the phosphoserine modification. 4 stretches are compositionally biased toward basic and acidic residues: residues P1326 to K1340, R1350 to E1361, V1377 to G1397, and E1422 to A1431.

The protein belongs to the MAGUK family. In terms of assembly, interacts with ADRB1, ADGRB1, LPAR2/EDG4, FZD4, FZD7, GRIN2B, TGFA and VANGL2. Interacts with PTEN. Interacts with ADRB1, PTPRB and unidentified tyrosine phosphorylated proteins. Interacts with DLL1. Interacts with PRRG4 (via cytoplasmic domain).

Its subcellular location is the cell membrane. The protein resides in the cell junction. The protein localises to the tight junction. It is found in the nucleus. Its function is as follows. Acts as a scaffolding protein at cell-cell junctions, thereby regulating various cellular and signaling processes. Cooperates with PTEN to modulate the kinase activity of AKT1. Its interaction with PTPRB and tyrosine phosphorylated proteins suggests that it may link receptor tyrosine phosphatase with its substrates at the plasma membrane. In polarized epithelial cells, involved in efficient trafficking of TGFA to the cell surface. Regulates the ability of LPAR2 to activate ERK and RhoA pathways. Regulates the JNK signaling cascade via its interaction with FZD4 and VANGL2. In Rattus norvegicus (Rat), this protein is Membrane-associated guanylate kinase, WW and PDZ domain-containing protein 3 (Magi3).